The sequence spans 532 residues: uncharacterized protein (532 aa).

6 helical membrane passes run 7–26, 30–52, 59–77, 87–109, 116–134, and 139–161; these read HSSY…LGRI, GLSL…GVII, FGLV…PGFF, LILI…KYAF, VVGL…AVAI, and SPLA…ILFV. RCK C-terminal domains are found at residues 179 to 262 and 263 to 346; these read LEIE…LIGE and REEG…LLGN. 6 helical membrane passes run 356 to 376, 386 to 408, 421 to 440, 445 to 467, 474 to 496, and 506 to 528; these read FFPI…NISF, LTGG…PIIW, LGLL…NLVA, SGLL…AVIV, INIL…LAAA, and SVAY…QVIS.

It belongs to the AAE transporter (TC 2.A.81) family.

Its subcellular location is the cell membrane. This is an uncharacterized protein from Bacteroides thetaiotaomicron (strain ATCC 29148 / DSM 2079 / JCM 5827 / CCUG 10774 / NCTC 10582 / VPI-5482 / E50).